Here is a 156-residue protein sequence, read N- to C-terminus: ATP synthase subunit b (156 aa).

A helical transmembrane segment spans residues 5 to 25; the sequence is LTMIGQAIAFFIFVVFCMKYV.

The protein belongs to the ATPase B chain family. As to quaternary structure, F-type ATPases have 2 components, F(1) - the catalytic core - and F(0) - the membrane proton channel. F(1) has five subunits: alpha(3), beta(3), gamma(1), delta(1), epsilon(1). F(0) has three main subunits: a(1), b(2) and c(10-14). The alpha and beta chains form an alternating ring which encloses part of the gamma chain. F(1) is attached to F(0) by a central stalk formed by the gamma and epsilon chains, while a peripheral stalk is formed by the delta and b chains.

The protein resides in the cell inner membrane. F(1)F(0) ATP synthase produces ATP from ADP in the presence of a proton or sodium gradient. F-type ATPases consist of two structural domains, F(1) containing the extramembraneous catalytic core and F(0) containing the membrane proton channel, linked together by a central stalk and a peripheral stalk. During catalysis, ATP synthesis in the catalytic domain of F(1) is coupled via a rotary mechanism of the central stalk subunits to proton translocation. Its function is as follows. Component of the F(0) channel, it forms part of the peripheral stalk, linking F(1) to F(0). The polypeptide is ATP synthase subunit b (Hahella chejuensis (strain KCTC 2396)).